The primary structure comprises 154 residues: uncharacterized protein (154 aa).

A signal peptide spans 1–21 (MSISSGSFAQPAAVVSSPGVT).

This sequence belongs to the ivy family.

It localises to the periplasm. This is an uncharacterized protein from Yersinia pestis.